The following is a 106-amino-acid chain: ATP-dependent Clp protease adapter protein ClpS (106 aa).

The protein belongs to the ClpS family. As to quaternary structure, binds to the N-terminal domain of the chaperone ClpA.

In terms of biological role, involved in the modulation of the specificity of the ClpAP-mediated ATP-dependent protein degradation. This chain is ATP-dependent Clp protease adapter protein ClpS, found in Aliivibrio salmonicida (strain LFI1238) (Vibrio salmonicida (strain LFI1238)).